Reading from the N-terminus, the 700-residue chain is Polyribonucleotide nucleotidyltransferase (700 aa).

Mg(2+) is bound by residues Asp-484 and Asp-490. The 60-residue stretch at 551–610 (PRVIRMVVDPEKIREIIGPGGKTISKIIAETGVKIDIEEDGRLYITASDLRSGERAKQMI) folds into the KH domain. One can recognise an S1 motif domain in the interval 620 to 688 (GEIYLGKVLR…KLGRISLSRK (69 aa)).

It belongs to the polyribonucleotide nucleotidyltransferase family. Mg(2+) serves as cofactor.

It localises to the cytoplasm. It carries out the reaction RNA(n+1) + phosphate = RNA(n) + a ribonucleoside 5'-diphosphate. In terms of biological role, involved in mRNA degradation. Catalyzes the phosphorolysis of single-stranded polyribonucleotides processively in the 3'- to 5'-direction. The sequence is that of Polyribonucleotide nucleotidyltransferase from Thermoanaerobacter sp. (strain X514).